A 290-amino-acid chain; its full sequence is Xyloglucan endotransglycosylase/hydrolase protein 8 (290 aa).

Positions 1–25 are cleaved as a signal peptide; it reads MAKHLALSVAAAVAVSWLAASSAAA. The GH16 domain maps to 26-218; sequence AGFYEKFDVV…WSGAPFVVSY (193 aa). Glutamate 106 serves as the catalytic Nucleophile. Glutamate 110 acts as the Proton donor in catalysis. Glutamate 110 provides a ligand contact to xyloglucan. N-linked (GlcNAc...) asparagine glycosylation is present at asparagine 114. Residues 123–125, 133–135, and 197–198 contribute to the xyloglucan site; these read NTN, KKE, and YW. 2 cysteine pairs are disulfide-bonded: cysteine 226–cysteine 240 and cysteine 273–cysteine 287. Arginine 278 contacts xyloglucan.

Belongs to the glycosyl hydrolase 16 family. XTH group 2 subfamily. Contains at least one intrachain disulfide bond essential for its enzymatic activity. In terms of tissue distribution, transcript strongly detected in leaf sheaths. Weakly or not expressed in leaf blades, roots and calli. Accumulation of transcript detected in shoot apex meristem, vascular tissues, young leaves, vascular bundles of leaf sheaths, and peripheral cylinder of the vascular bundles and fibers in the nodal region.

It localises to the secreted. The protein localises to the cell wall. It is found in the extracellular space. Its subcellular location is the apoplast. The catalysed reaction is breaks a beta-(1-&gt;4) bond in the backbone of a xyloglucan and transfers the xyloglucanyl segment on to O-4 of the non-reducing terminal glucose residue of an acceptor, which can be a xyloglucan or an oligosaccharide of xyloglucan.. Functionally, catalyzes xyloglucan endohydrolysis (XEH) and/or endotransglycosylation (XET). Cleaves and religates xyloglucan polymers, an essential constituent of the primary cell wall, and thereby participates in cell wall construction of growing tissues. May promote elongation of three internodes (II, III and IV) and may be involved in cell elongation processes. The polypeptide is Xyloglucan endotransglycosylase/hydrolase protein 8 (XTH8) (Oryza sativa subsp. japonica (Rice)).